The chain runs to 387 residues: Beta-citrylglutamate synthase B (387 aa).

The ATP-grasp domain occupies 119–304 (FQELAGHGVP…VAGIIADYAA (186 aa)). Residues lysine 158, 193-203 (QKYIKESHGRD), and arginine 219 each bind ATP. Mg(2+) is bound by residues aspartate 264, glutamate 277, and asparagine 279. The Mn(2+) site is built by aspartate 264, glutamate 277, and asparagine 279. Positions 325 to 361 (ASETSEPELGPPASAAVDNMSASSSSVDSDPESTTER) are disordered. Residues 337–352 (ASAAVDNMSASSSSVD) show a composition bias toward low complexity.

Belongs to the RimK family. It depends on Mg(2+) as a cofactor. The cofactor is Mn(2+). In terms of tissue distribution, strongly expressed in brain and testis. Expressed in eyes, thymus, lung, kidney, skeletal muscle, spleen, skin and heart. Expressed in neurons of the neocortex, the gray matter and Purkinje cells.

The protein localises to the cytoplasm. It carries out the reaction citrate + L-glutamate + ATP = beta-citrylglutamate + ADP + phosphate + H(+). The enzyme catalyses N-acetyl-L-aspartate + L-glutamate + ATP = N-acetyl-L-aspartyl-L-glutamate + ADP + phosphate + H(+). Functionally, catalyzes the synthesis of beta-citryl-L-glutamate and N-acetyl-L-aspartyl-L-glutamate. Beta-citryl-L-glutamate is synthesized more efficiently than N-acetyl-L-aspartyl-L-glutamate. In Mus musculus (Mouse), this protein is Beta-citrylglutamate synthase B (Rimklb).